Here is a 236-residue protein sequence, read N- to C-terminus: Large ribosomal subunit protein uL2 (236 aa).

The tract at residues 198 to 236 is disordered; that stretch reads DHPFGGGGRQHPGRPKTVSRGTPPGRKVGSIAARRTGKR.

It belongs to the universal ribosomal protein uL2 family. In terms of assembly, part of the 50S ribosomal subunit. Forms a bridge to the 30S subunit in the 70S ribosome.

In terms of biological role, one of the primary rRNA binding proteins. Required for association of the 30S and 50S subunits to form the 70S ribosome, for tRNA binding and peptide bond formation. It has been suggested to have peptidyltransferase activity; this is somewhat controversial. Makes several contacts with the 16S rRNA in the 70S ribosome. The protein is Large ribosomal subunit protein uL2 of Methanothrix thermoacetophila (strain DSM 6194 / JCM 14653 / NBRC 101360 / PT) (Methanosaeta thermophila).